The primary structure comprises 525 residues: BTB/POZ domain-containing protein 2 (525 aa).

The disordered stretch occupies residues 1–86 (MAAGGSGGRA…AEEAAGPGAA (86 aa)). Positions 16 to 26 (VGVGPGTGGSP) are enriched in gly residues. A compositionally biased stretch (low complexity) spans 27–55 (GPSANAAATPAPGNAAAAAAAAAAAAAAP). Positions 56–65 (GPTPPAPPGP) are enriched in pro residues. The span at 66–86 (GTDAQAAGAERAEEAAGPGAA) shows a compositional bias: low complexity. Positions 117–187 (CDVHFLVGKG…LYSDEVQIGP (71 aa)) constitute a BTB domain.

Interacts with topoisomerase 1 and with TRIM5 isoform Delta.

Its subcellular location is the cytoplasm. This chain is BTB/POZ domain-containing protein 2 (BTBD2), found in Homo sapiens (Human).